A 72-amino-acid polypeptide reads, in one-letter code: Brevinin-2GHb (72 aa).

Positions 1–22 (MFTMKKSLLLLFFLGTVSLSLC) are cleaved as a signal peptide. The propeptide occupies 23–42 (EQERGADEDDGGEMTEELKR). Residues C66 and C72 are joined by a disulfide bond.

In terms of tissue distribution, expressed by the skin glands.

It is found in the secreted. Its function is as follows. Antimicrobial peptide. Active against the Gram-positive bacteria S.aureus FDA209P (MIC=16.5 ug/ml) and B.subtilis ATCC 6633 (MIC&gt;64 ug/ml), and the Gram-negative bacteria E.coli O111 (MIC=8.2 ug/ml) and E.coli ATCC 25922 (MIC=8.2 ug/ml). Not active against the fungus C.albicans. This is Brevinin-2GHb from Sylvirana guentheri (Gunther's frog).